The sequence spans 135 residues: Large ribosomal subunit protein uL16c (135 aa).

It belongs to the universal ribosomal protein uL16 family. As to quaternary structure, part of the 50S ribosomal subunit.

It is found in the plastid. The protein localises to the chloroplast. In Acorus calamus var. americanus (American sweet flag), this protein is Large ribosomal subunit protein uL16c.